A 158-amino-acid chain; its full sequence is Endoribonuclease YbeY (158 aa).

The Zn(2+) site is built by His-117, His-121, and His-127.

Belongs to the endoribonuclease YbeY family. The cofactor is Zn(2+).

The protein localises to the cytoplasm. Its function is as follows. Single strand-specific metallo-endoribonuclease involved in late-stage 70S ribosome quality control and in maturation of the 3' terminus of the 16S rRNA. This chain is Endoribonuclease YbeY, found in Psychromonas ingrahamii (strain DSM 17664 / CCUG 51855 / 37).